A 339-amino-acid polypeptide reads, in one-letter code: Probable cytosolic iron-sulfur protein assembly protein CIAO1 (339 aa).

7 WD repeats span residues 14 to 53 (HPDSRCWFLAWNPTGTLLASCGGDRKIRIWGTEGDSWICK), 59 to 98 (GHQRTVRKVAWSPCGNYLASASFDATTCIWKKNQDDFECV), 103 to 142 (GHENEVKSVAWAPSGNLLATCSRDKSVWVWEVDEEDEYEC), 148 to 187 (SHTQDVKHVVWHPSQELLASASYDDTVKLYQEEGDDWVCC), 192 to 231 (GHESTVWSIAFDPSGQRLASCSDDRTVRIWRQYLPGNEQG), 250 to 289 (FHTRTIYDVAWCQLTGALATACGDDAIRVFEEDPGSDPQQ), and 301 to 339 (AHSQDVNCVAWNPKEAGLLASCSDDGEVAFWEYHQPAGL). The LYR motif; required for interaction with HSC20 signature appears at 176–178 (LYQ).

This sequence belongs to the WD repeat CIA1 family. In terms of assembly, component of the CIA complex. Interacts with CIAO2A and forms a complex with CIAO2B and MMS19; the interactions with CIAO2A and CIAO2B are mutually exclusive. Interacts with CHD1L, ERCC2, IREB2 and POLD1. Component of the MMXD complex, which includes CIAO1, ERCC2, CIAO2B, MMS19 and SLC25A5. Interacts with WT1. Interacts with CIAO3. Interacts (via LYR motif) with HSC20.

It localises to the cytoplasm. Its function is as follows. Key component of the cytosolic iron-sulfur protein assembly (CIA) complex, a multiprotein complex that mediates the incorporation of iron-sulfur cluster into extramitochondrial Fe/S proteins. As a CIA complex component, interacts specifically with CIAO2A or CIAO2B and MMS19 to assist different branches of iron-sulfur protein assembly, depending of its interactors. The complex CIAO1:CIAO2B:MMS19 binds to and facilitates the assembly of most cytosolic-nuclear Fe/S proteins. CIAO1:CIAO2A specifically matures ACO1 and stabilizes IREB2. Seems to specifically modulate the transactivation activity of WT1. As part of the mitotic spindle-associated MMXD complex it may play a role in chromosome segregation. The polypeptide is Probable cytosolic iron-sulfur protein assembly protein CIAO1 (Rattus norvegicus (Rat)).